The following is a 296-amino-acid chain: Phosphatidylglycerol--prolipoprotein diacylglyceryl transferase (296 aa).

Transmembrane regions (helical) follow at residues 17–37 (LAVRWYGLMYLVGFIFAIVVG), 59–79 (MMFYGVLGVVLGGRLGYVLFY), and 97–117 (GGMSFHGGFLGVTLAMALFAW). Residue Arg-142 participates in a 1,2-diacyl-sn-glycero-3-phospho-(1'-sn-glycerol) binding. 2 helical membrane passes run 230 to 250 (MGAISALFLIGYGAARFTVEF) and 265 to 285 (LSMGQWLSLPMIVAGVLMMIW).

It belongs to the Lgt family.

It is found in the cell inner membrane. It carries out the reaction L-cysteinyl-[prolipoprotein] + a 1,2-diacyl-sn-glycero-3-phospho-(1'-sn-glycerol) = an S-1,2-diacyl-sn-glyceryl-L-cysteinyl-[prolipoprotein] + sn-glycerol 1-phosphate + H(+). It functions in the pathway protein modification; lipoprotein biosynthesis (diacylglyceryl transfer). Catalyzes the transfer of the diacylglyceryl group from phosphatidylglycerol to the sulfhydryl group of the N-terminal cysteine of a prolipoprotein, the first step in the formation of mature lipoproteins. In Burkholderia pseudomallei (strain 668), this protein is Phosphatidylglycerol--prolipoprotein diacylglyceryl transferase.